A 688-amino-acid chain; its full sequence is Probable xyloglucan glycosyltransferase 7 (688 aa).

Residues 1–25 form a disordered region; the sequence is MAPSWWGRSGGGGVGNGGGTPVVVK. Over residues 8–20 the composition is skewed to gly residues; it reads RSGGGGVGNGGGT. 2 helical membrane-spanning segments follow: residues 121-141 and 183-203; these read VSLVLSLLLLAVEVAAYLQGW and VALFMVQSIDRLVLCLGCFWI. Aspartate 269 is a catalytic residue. Substrate contacts are provided by aspartate 328 and aspartate 330. Aspartate 422 is an active-site residue. 2 consecutive transmembrane segments (helical) span residues 500 to 520 and 525 to 545; these read LILPFYSFTLFCVILPMTMFV and LPAWVVCYIPATMSILNILPA. The interval 604–635 is disordered; the sequence is HSKQQRVGSAPNLDALTKEESNPKKDSKKKKH. Over residues 619 to 628 the composition is skewed to basic and acidic residues; sequence LTKEESNPKK. Transmembrane regions (helical) follow at residues 638-657 and 663-683; these read IYRKELALSFLLLTAAARSL and IHFYFLLFQGVSFLVVGLDLI.

The protein belongs to the glycosyltransferase 2 family. Plant cellulose synthase-like C subfamily.

Its subcellular location is the golgi apparatus membrane. Its function is as follows. Probable beta-1,4-glucan synthase rather involved in the synthesis of the xyloglucan backbone than cellulose. Seems to work simultaneously with xyloglucan 6-xylosyltransferase. Xyloglucan is a noncellulosic polysaccharides of plant cell wall and consists of a glucan backbone substituted by xylose, galactose and fucose. This chain is Probable xyloglucan glycosyltransferase 7 (CSLC7), found in Oryza sativa subsp. japonica (Rice).